A 1444-amino-acid polypeptide reads, in one-letter code: MHQPKKRLAKKSWAFLTAALTLGVITGVGGYFLFNQNKQRSSVSNFAYQPKQLSVKHQQAVDETLTPWTWNNNNFSSLKITGENPGSFGLVRSQNDNLNISSVTKNSSDDNLKYLNAVEKYLDGQQNFAIRRYDNNGRALYDINLAKMENPSTVQRGLNGEPIFDPFKGFGLTGNAPTDWNEIKGKVPVEVVQSPHSPNLYFVLLVPKVALEYHNLNNQVVKESLEVKATQSSFNPTQRLQKDSPVKDSSKQGEKLSETTASSMSSGMATSTRAKALKVEVERGSQSDSLLKNDFAKKPLKHKNSSGEVKLEAEKEFTEAWKPLLTTDQIAREKGMGATVVSFYDAPYSENHTAFGLVDHIDPKKMVENYPPSWKTPKWNHHGIWDYNARNLLLQTTGFFNPRRHPEWFDEGQAKADNTSPGFKVGDTDHKKDGFKKNSSSPIALPFEAYFANIGNMVAIGNSVFIFGGNGHATKMFTTNPLSIGVFRIKYTDNFSKSSVTGWPYAVLFGGLINPQTNGLKDLPLGTNRWFEYVPRMAVSGVKWVGNQLVLAGTLTMGDTATVPRLKYDQLEKHLNLVAQGQGLLREDLQIFTPYGWANRPDIPVGAWLQDEMGSKFGPHYFLNNPDIQDNVNNDTVEALISSYKNTDKLKHVYPYRYSGLYAWQLFNWSNKLTNTPLSANFVNENSYAPNSLFAAILNEDLLTGLSDKIFYGKENEFAENEADRFNQLLSLNPNPNTNWARYLNVVQRFTTGPNLDSSTFDQFLDFLPWIGNGKPFSNSPSPSTSASSSTPLPTFSNINVGVKSMITQHLNKENTRWVFIPNFSPDIWTGAGYRVQSANQKNGIPFEQVKPSNNSTPFDPNSDDNKVTPSGGSSKPTTYPALPNSISPTSDWINALTFTNKNNPQRNQLLLRSLLGTIPVLINKSGDSNDQFNKDSEQKWDKTETNEGNLPGFGEVNGLYNAALLHTYGFFGTNTNSTDPKIGFKADSSSSSSSTLVGSGLNWTSQDVGNLVVINDTSFGFQLGGWFITFTDFIRPRTGYLGITLSSLQDQTIIWADQPWTSFKGSYLDSDGTPKSLWDPTALKSLPNSSTTYDTNPTLSPSFQLYQPNKVKAYQTTNTYNKLIEPVDATSAATNMTSLLKLLTTKNIKAKLGKGTASSQGNNNGGGVSQTINTITTTGNISEGLKEETSIQAETLKKFFDSKQNNKSEIGIGDSTFTKMDGKLTGVVSTPLVNLINGQGATSDSDTEKISFKPGNQIDFNRLFTLPVTELFDPNTMFVYDQYVPLLVNLPSGFDQASIRLKVISYSVENQTLGVRLEFKDPQTQQFIPVLNASSTGPQTVFQPFNQWADYVLPLIVTVPIVVIILSVTLGLTIGIPMHRNKKALQAGFDLSNKKVDVLTKAVGSVFKEIINRTGISNAPKKLKQATPTKPTPKTPPKPPVKQ.

Positions 1-30 (MHQPKKRLAKKSWAFLTAALTLGVITGVGG) are cleaved as a signal peptide. Disordered regions lie at residues 231-283 (QSSF…EVER), 845-885 (IPFE…ALPN), and 927-949 (GDSN…TNEG). Residues 240–257 (LQKDSPVKDSSKQGEKLS) are compositionally biased toward basic and acidic residues. Residues 258–272 (ETTASSMSSGMATST) are compositionally biased toward low complexity. Polar residues-rich tracts occupy residues 851–860 (KPSNNSTPFD) and 868–878 (VTPSGGSSKPT). A compositionally biased stretch (basic and acidic residues) spans 933–946 (FNKDSEQKWDKTET). A helical membrane pass occupies residues 1353–1373 (VLPLIVTVPIVVIILSVTLGL). The interval 1419-1444 (NAPKKLKQATPTKPTPKTPPKPPVKQ) is disordered. The span at 1431 to 1444 (KPTPKTPPKPPVKQ) shows a compositional bias: pro residues.

Belongs to the adhesin P1 family.

The protein resides in the cell membrane. Functionally, the protein is the major adhesin mediating the attachment of this mycoplasma to the ciliated epithelium. The protein is Adhesin P1 (mgpA) of Mycoplasma genitalium (strain ATCC 33530 / DSM 19775 / NCTC 10195 / G37) (Mycoplasmoides genitalium).